A 110-amino-acid polypeptide reads, in one-letter code: Thiosulfate sulfurtransferase GlpE (110 aa).

The Rhodanese domain occupies 17–105 (RENGAQVVDI…WRSVYPADTS (89 aa)). Cys-65 serves as the catalytic Cysteine persulfide intermediate.

This sequence belongs to the GlpE family.

It localises to the cytoplasm. It catalyses the reaction thiosulfate + hydrogen cyanide = thiocyanate + sulfite + 2 H(+). The catalysed reaction is thiosulfate + [thioredoxin]-dithiol = [thioredoxin]-disulfide + hydrogen sulfide + sulfite + 2 H(+). Transferase that catalyzes the transfer of sulfur from thiosulfate to thiophilic acceptors such as cyanide or dithiols. May function in a CysM-independent thiosulfate assimilation pathway by catalyzing the conversion of thiosulfate to sulfite, which can then be used for L-cysteine biosynthesis. This Pseudomonas aeruginosa (strain ATCC 15692 / DSM 22644 / CIP 104116 / JCM 14847 / LMG 12228 / 1C / PRS 101 / PAO1) protein is Thiosulfate sulfurtransferase GlpE.